Here is a 63-residue protein sequence, read N- to C-terminus: Large ribosomal subunit protein bL28 (63 aa).

The protein belongs to the bacterial ribosomal protein bL28 family.

The chain is Large ribosomal subunit protein bL28 (rpmB) from Selenomonas ruminantium.